The primary structure comprises 237 residues: Proteasome subunit beta type-1 (237 aa).

This sequence belongs to the peptidase T1B family. In terms of assembly, the 26S proteasome consists of a 20S proteasome core and two 19S regulatory subunits. The 20S proteasome core is a barrel-shaped complex made of 28 subunits that are arranged in four stacked rings. The two outer rings are each formed by seven alpha subunits, and the two inner rings are formed by seven beta subunits. The proteolytic activity is exerted by three beta-subunits psmb5, psmb6 and psmb7.

It localises to the cytoplasm. It is found in the nucleus. Its function is as follows. Non-catalytic component of the 20S core proteasome complex involved in the proteolytic degradation of most intracellular proteins. This complex plays numerous essential roles within the cell by associating with different regulatory particles. Associated with two 19S regulatory particles, forms the 26S proteasome and thus participates in the ATP-dependent degradation of ubiquitinated proteins. The 26S proteasome plays a key role in the maintenance of protein homeostasis by removing misfolded or damaged proteins that could impair cellular functions, and by removing proteins whose functions are no longer required. Associated with the PA200 or PA28, the 20S proteasome mediates ubiquitin-independent protein degradation. In Danio rerio (Zebrafish), this protein is Proteasome subunit beta type-1.